We begin with the raw amino-acid sequence, 85 residues long: Large ribosomal subunit protein bL27 (85 aa).

The tract at residues 1–22 (MAKTKAGGSTRNGRDSKGRRLG) is disordered.

Belongs to the bacterial ribosomal protein bL27 family.

The sequence is that of Large ribosomal subunit protein bL27 from Mycoplasmopsis pulmonis (strain UAB CTIP) (Mycoplasma pulmonis).